The primary structure comprises 512 residues: Ammonium transporter 2 (512 aa).

The Extracellular segment spans residues 1 to 47 (MSSVNSIPTATSTVYISVLPATATPSGGSGGNVLHEDLNKFYDYGNT). The helical transmembrane segment at 48–68 (SWILACTPLCLIMVPGVAFFY) threads the bilayer. Residues 69-77 (SGLARRKNT) are Cytoplasmic-facing. A helical membrane pass occupies residues 78-98 (LALIMLSMLGLCVSFFQWYFW). The Extracellular segment spans residues 99-137 (GYSLAFSQTGTSGYIGNLRHFAFIRTLADYSPGSNNIPE). Residues 138 to 158 (LVFANFQGMFAAITVALFTGA) form a helical membrane-spanning segment. Residues 159-167 (AAERGRIGP) lie on the Cytoplasmic side of the membrane. A helical transmembrane segment spans residues 168–188 (MLIITFVWLTVVYCPIACWIW). Topologically, residues 189-201 (NPNGWAFKFGVYD) are extracellular. A helical membrane pass occupies residues 202–222 (FAGGGPVEVGSGFAALAYTVC). At 223–238 (LGRRSKFVEEQFRPHS) the chain is on the cytoplasmic side. A helical membrane pass occupies residues 239-259 (VLNVVLGTSLLWFGWLGFNGG). The Extracellular segment spans residues 260 to 267 (SAYGSNLR). The chain crosses the membrane as a helical span at residues 268 to 288 (AAMAITNTNLAGAVAGLVWVI). Topologically, residues 289–300 (YDYIFRTRKWST) are cytoplasmic. A helical transmembrane segment spans residues 301-321 (IGFCSGVVAGLVAATPCAGFV). A topological domain (extracellular) is located at residue Ser-322. Residues 323–343 (PHASLAIGAITGLCCNWAIKL) traverse the membrane as a helical segment. Over 344-354 (KSHMRIDDAMD) the chain is Cytoplasmic. A helical transmembrane segment spans residues 355–375 (IFAIHGVAGFVGTFLNGLFAV). Residues 376 to 406 (DYIAAMDGIYVGENKIRGGWFDHHWRQLGLQ) lie on the Extracellular side of the membrane. The chain crosses the membrane as a helical span at residues 407–427 (MAYICAVGAYDFVVTFIILFI). The Cytoplasmic portion of the chain corresponds to 428-512 (TDKIPYLQLR…TNPLELGLTI (85 aa)).

It belongs to the ammonia transporter channel (TC 1.A.11.2) family.

Its subcellular location is the membrane. Its function is as follows. Transporter for ammonium to use as a nitrogen source. This Schizosaccharomyces pombe (strain 972 / ATCC 24843) (Fission yeast) protein is Ammonium transporter 2 (amt2).